The primary structure comprises 524 residues: MIDKDMNSACMRGGSVRTLNNYQQVMEPRSPHTAWQFGVSQIVKREPMDEDKNDSGVTSGSDFHSSSPSSDTSQDLQHSYQSPQTQPARFYSTPIVPHFAYNHNPLTPPNSEPLVSPKSEKEEKDMETTLTPCASPNRKPDDNQDHLRRLEMSLEKSGLFSSKTSEHSVDELSGKSDNDAEEYDEQSLRVPKVNSHGKIKTFKCKQCDFVAITKLEQWNHSKVHIREDKRLTCPKCPFITEYKHHLEYHLRNHAGSKPFQCNKCDYTCVNKSMLNSHMKSHSNVYRYSCRDCSYATKYCHSLKIHLRRYGHTPNVVLDEEGNPCPDIIIDVHGTRRGPKIKTQPKAEEAKPETLPFLNLQQQLPFPGYPFFGGFPNAQLLQQLIRERQLAVGGSQEESRVLDLSKPGCSYTGEQKSRRKGPAFKVDPTQVESEEEDEETSTTVFSNVEVVQEEAKKEESDSNNNNNKEEGNSCQYCNIAFGDAVLYTIHMGYHGFHNPFTCNMCGVECSDKVSFFLHIARVSHS.

Disordered regions lie at residues 42–86 and 101–187; these read IVKR…PQTQ and YNHN…DEQS. The segment covering 59-75 has biased composition (low complexity); sequence SGSDFHSSSPSSDTSQD. Polar residues predominate over residues 76 to 86; the sequence is LQHSYQSPQTQ. 3 stretches are compositionally biased toward basic and acidic residues: residues 118 to 127, 138 to 154, and 164 to 178; these read KSEKEEKDME, RKPD…EMSL, and TSEH…KSDN. 4 consecutive C2H2-type zinc fingers follow at residues 202-224, 231-253, 259-281, and 298-311; these read FKCK…SKVH, LTCP…LRNH, FQCN…MKSH, and YCHS…RYGH. Positions 402-442 are disordered; that stretch reads DLSKPGCSYTGEQKSRRKGPAFKVDPTQVESEEEDEETSTT. C2H2-type zinc fingers lie at residues 471–493 and 499–523; these read NSCQ…MGYH and FTCN…RVSH.

This sequence belongs to the hunchback C2H2-type zinc-finger protein family.

Its subcellular location is the nucleus. In terms of biological role, gap class segmentation protein that controls development of head structures. This Tribolium castaneum (Red flour beetle) protein is Protein hunchback (hb).